Consider the following 281-residue polypeptide: Bis(5'-nucleosyl)-tetraphosphatase, symmetrical (281 aa).

The protein belongs to the Ap4A hydrolase family.

The enzyme catalyses P(1),P(4)-bis(5'-adenosyl) tetraphosphate + H2O = 2 ADP + 2 H(+). Its function is as follows. Hydrolyzes diadenosine 5',5'''-P1,P4-tetraphosphate to yield ADP. The protein is Bis(5'-nucleosyl)-tetraphosphatase, symmetrical of Pectobacterium carotovorum subsp. carotovorum (strain PC1).